We begin with the raw amino-acid sequence, 266 residues long: Phosphate import ATP-binding protein PstB 1 (266 aa).

One can recognise an ABC transporter domain in the interval Ile21 to Ile261. Gly54–Ser61 is a binding site for ATP.

Belongs to the ABC transporter superfamily. Phosphate importer (TC 3.A.1.7) family. The complex is composed of two ATP-binding proteins (PstB), two transmembrane proteins (PstC and PstA) and a solute-binding protein (PstS).

It is found in the cell membrane. The catalysed reaction is phosphate(out) + ATP + H2O = ADP + 2 phosphate(in) + H(+). Its function is as follows. Part of the ABC transporter complex PstSACB involved in phosphate import. Responsible for energy coupling to the transport system. The sequence is that of Phosphate import ATP-binding protein PstB 1 from Lactobacillus johnsonii (strain CNCM I-12250 / La1 / NCC 533).